The following is a 375-amino-acid chain: Growth/differentiation factor 8 (375 aa).

A signal peptide spans 1-23 (MQKLAVYVYIYLFMQILVHPVAL). Positions 24–266 (DGSSQPTENA…VTDTPKRSRR (243 aa)) are excised as a propeptide. An N-linked (GlcNAc...) asparagine glycan is attached at N71. 4 disulfides stabilise this stretch: C272–C282, C281–C340, C309–C372, and C313–C374.

It belongs to the TGF-beta family. Homodimer; disulfide-linked.

The protein localises to the secreted. In terms of biological role, acts specifically as a negative regulator of skeletal muscle growth. The protein is Growth/differentiation factor 8 (MSTN) of Meleagris gallopavo (Wild turkey).